A 431-amino-acid chain; its full sequence is tRNA(Ile)-lysidine synthase (431 aa).

19–24 (STGIDS) is a binding site for ATP.

The protein belongs to the tRNA(Ile)-lysidine synthase family.

It localises to the cytoplasm. The catalysed reaction is cytidine(34) in tRNA(Ile2) + L-lysine + ATP = lysidine(34) in tRNA(Ile2) + AMP + diphosphate + H(+). In terms of biological role, ligates lysine onto the cytidine present at position 34 of the AUA codon-specific tRNA(Ile) that contains the anticodon CAU, in an ATP-dependent manner. Cytidine is converted to lysidine, thus changing the amino acid specificity of the tRNA from methionine to isoleucine. The sequence is that of tRNA(Ile)-lysidine synthase from Staphylococcus aureus (strain Mu50 / ATCC 700699).